The following is a 261-amino-acid chain: Carboxy-terminal domain RNA polymerase II polypeptide A small phosphatase 1 (261 aa).

Residue M1 is modified to N-acetylmethionine. Polar residues predominate over residues 1–10; it reads MDSSAVITQI. Residues 1–33 form a disordered region; that stretch reads MDSSAVITQISKEEARGPLRGKGDQKSAASQKP. Positions 11–25 are enriched in basic and acidic residues; that stretch reads SKEEARGPLRGKGDQ. The FCP1 homology domain maps to 86–244; the sequence is QDSDKICVVI…HDLLPFFEQL (159 aa). Catalysis depends on D96, which acts as the 4-aspartylphosphate intermediate. Mg(2+) contacts are provided by D96, D98, and N207. The active-site Proton donor is D98.

Monomer. Interacts with GTF2F1. Interacts with REST. It depends on Mg(2+) as a cofactor. In terms of tissue distribution, expression is restricted to non-neuronal tissues. Highest expression in skeletal muscle, spleen, lung and placenta.

Its subcellular location is the nucleus. It carries out the reaction O-phospho-L-seryl-[protein] + H2O = L-seryl-[protein] + phosphate. It catalyses the reaction O-phospho-L-threonyl-[protein] + H2O = L-threonyl-[protein] + phosphate. With respect to regulation, stimulated by GTF2F1. Inhibited by beryllofluoride anions. Preferentially catalyzes the dephosphorylation of 'Ser-5' within the tandem 7 residue repeats in the C-terminal domain (CTD) of the largest RNA polymerase II subunit POLR2A. Negatively regulates RNA polymerase II transcription, possibly by controlling the transition from initiation/capping to processive transcript elongation. Recruited by REST to neuronal genes that contain RE-1 elements, leading to neuronal gene silencing in non-neuronal cells. This is Carboxy-terminal domain RNA polymerase II polypeptide A small phosphatase 1 (CTDSP1) from Homo sapiens (Human).